The sequence spans 456 residues: RuvB-like 1 (456 aa).

Lysine 2 participates in a covalent cross-link: Glycyl lysine isopeptide (Lys-Gly) (interchain with G-Cter in SUMO2). 70 to 77 (GPPGTGKT) serves as a coordination point for ATP. Lysine 225 participates in a covalent cross-link: Glycyl lysine isopeptide (Lys-Gly) (interchain with G-Cter in SUMO1); alternate. A Glycyl lysine isopeptide (Lys-Gly) (interchain with G-Cter in SUMO2); alternate cross-link involves residue lysine 225. A Glycyl lysine isopeptide (Lys-Gly) (interchain with G-Cter in SUMO2) cross-link involves residue lysine 445. An N6-acetyllysine modification is found at lysine 453.

The protein belongs to the RuvB family. In terms of assembly, forms homohexameric rings. Can form a dodecamer with RUVBL2 made of two stacked hexameric rings; however, even though RUVBL1 and RUVBL2 are present in equimolar ratio, the oligomeric status of each hexamer is not known. Oligomerization may regulate binding to nucleic acids and conversely, binding to nucleic acids may affect the dodecameric assembly. Interaction of the complex with DHX34 results in conformational changes of the N-terminus of the RUVBL2 subunits, resulting in loss of nucleotide binding ability and ATP hydrolysis of the complex. Interacts with the transcriptional activation domain of MYC. Component of the RNA polymerase II holoenzyme complex. May also act to bridge the LEF1/TCF1-CTNNB1 complex and TBP. Component of the NuA4 histone acetyltransferase complex which contains the catalytic subunit KAT5/TIP60 and the subunits EP400, TRRAP/PAF400, BRD8/SMAP, EPC1, DMAP1/DNMAP1, RUVBL1/TIP49, RUVBL2, ING3, actin, ACTL6A/BAF53A, MORF4L1/MRG15, MORF4L2/MRGX, MRGBP, YEATS4/GAS41, VPS72/YL1 and MEAF6. The NuA4 complex interacts with MYC and the adenovirus E1A protein. RUVBL1 interacts with EP400. Component of a NuA4-related complex which contains EP400, TRRAP/PAF400, SRCAP, BRD8/SMAP, EPC1, DMAP1/DNMAP1, RUVBL1/TIP49, RUVBL2, actin, ACTL6A/BAF53A, VPS72 and YEATS4/GAS41. Component of the BAF53 complex, at least composed of ACTL6A/BAF53A, RUVBL1/TIP49, SMARCA2/BRM, and TRRAP/PAF400. Component of some MLL1/MLL complex, at least composed of the core components KMT2A/MLL1, ASH2L, HCFC1/HCF1, WDR5 and RBBP5, as well as the facultative components BACC1, CHD8, E2F6, HSP70, INO80C, KANSL1, LAS1L, MAX, MCRS1, MGA, MYST1/MOF, PELP1, PHF20, PRP31, RING2, RUVB1/TIP49A, RUVB2/TIP49B, SENP3, TAF1, TAF4, TAF6, TAF7, TAF9 and TEX10. Associates with alpha and gamma tubulins, particularly during metaphase and early anaphase. Interacts with NPAT. Component of the chromatin-remodeling INO80 complex; specifically part of a complex module associated with the helicase ATP-binding and the helicase C-terminal domain of INO80. Interacts with IGHMBP2. Interacts with OFD1. Interacts with HINT1. Component of a complex with USP49 and PSMC5. Component of a SWR1-like complex. Component of the R2TP complex composed at least of RUVBL1, RUVBL2, RPAP3 and PIHD1. Component of the PAQosome complex which is responsible for the biogenesis of several protein complexes and which consists of R2TP complex members RUVBL1, RUVBL2, RPAP3 and PIH1D1, URI complex members PFDN2, PFDN6, PDRG1, UXT and URI1 as well as ASDURF, POLR2E and DNAAF10/WDR92. Interacts with PIH1D1. Interacts with ITFG1. Interacts with WAC; WAC positively regulates MTOR activity by promoting the assembly of the TTT complex composed of TELO2, TTI1 and TTI2 and the RUVBL complex composed of RUVBL1 and RUVBL2 into the TTT-RUVBL complex which leads to the dimerization of the mTORC1 complex and its subsequent activation. The RUVBL1/RUVBL2 complex interacts with ZNHIT1 (via HIT-type zinc finger), ZNHIT3 (via HIT-type zinc finger), ZNHIT6 (via HIT-type zinc finger) and DDX59/ZNHIT5 (via HIT-type zinc finger) in the presence of ADP. Interacts with NOPCHAP1; the interaction is direct and disrupted upon ATP binding. Interacts with SMG1. Interacts with NOP2, NOP56 and NUFIP1. (Microbial infection) Interacts with Mumps L polymerase; this interaction regulates the viral transcription. As to expression, ubiquitously expressed with high expression in heart, skeletal muscle and testis.

Its subcellular location is the nucleus matrix. The protein localises to the nucleus. The protein resides in the nucleoplasm. It localises to the cytoplasm. It is found in the membrane. Its subcellular location is the cytoskeleton. The protein localises to the microtubule organizing center. The protein resides in the centrosome. It localises to the dynein axonemal particle. The catalysed reaction is ATP + H2O = ADP + phosphate + H(+). Its function is as follows. Possesses single-stranded DNA-stimulated ATPase and ATP-dependent DNA helicase (3' to 5') activity; hexamerization is thought to be critical for ATP hydrolysis and adjacent subunits in the ring-like structure contribute to the ATPase activity. Component of the NuA4 histone acetyltransferase complex which is involved in transcriptional activation of select genes principally by acetylation of nucleosomal histones H4 and H2A. This modification may both alter nucleosome-DNA interactions and promote interaction of the modified histones with other proteins which positively regulate transcription. This complex may be required for the activation of transcriptional programs associated with oncogene and proto-oncogene mediated growth induction, tumor suppressor mediated growth arrest and replicative senescence, apoptosis, and DNA repair. The NuA4 complex ATPase and helicase activities seem to be, at least in part, contributed by the association of RUVBL1 and RUVBL2 with EP400. NuA4 may also play a direct role in DNA repair when recruited to sites of DNA damage. Component of a SWR1-like complex that specifically mediates the removal of histone H2A.Z/H2AZ1 from the nucleosome. Proposed core component of the chromatin remodeling INO80 complex which exhibits DNA- and nucleosome-activated ATPase activity and catalyzes ATP-dependent nucleosome sliding. Plays an essential role in oncogenic transformation by MYC and also modulates transcriptional activation by the LEF1/TCF1-CTNNB1 complex. Essential for cell proliferation. May be able to bind plasminogen at cell surface and enhance plasminogen activation. The polypeptide is RuvB-like 1 (Homo sapiens (Human)).